We begin with the raw amino-acid sequence, 222 residues long: MYNIEKFIKVGAHFGHTTSKWNPNMRKYIFMKKGGIHIIDISKTIKKINEACKFIKNIVSSGKKILFVATKKQAKDIVSDYAKKVNMPYITERWLGGILTNMSTIRQSVKKMNVIDRQKIDGTYNMMSKKEKLLIDRLKNKLKKNIGSISKMNSLPACVIIVDVKKEKIAVKECINLCIPIIGIVDTNCDPRNIDYPIPANDDSSKSIHLIISYLTNSILTN.

Belongs to the universal ribosomal protein uS2 family.

This Karelsulcia muelleri (strain GWSS) (Sulcia muelleri) protein is Small ribosomal subunit protein uS2.